The sequence spans 808 residues: LisH domain-containing protein ARMC9 (808 aa).

A LisH domain is found at 7–39 (YEADLLGLVKEFLNFGEFQETLETFTKECKTKG). Positions 196-230 (ITLYKESLHNNQELLQQLQQQLMETEHKARTYKKC) form a coiled coil. Disordered regions lie at residues 576–599 (FDESIESDDEEEEKDDEEDEDALE), 650–709 (PLQR…DYCV), and 742–808 (GMEK…SYRK). The segment covering 579 to 599 (SIESDDEEEEKDDEEDEDALE) has biased composition (acidic residues). 3 stretches are compositionally biased toward polar residues: residues 655 to 668 (VTPSTHRVMNTVRK), 677 to 709 (TNTFKTSQANMSVVSSRPPTRSGSRASTSDYCV), and 775 to 784 (IAPQFSQSGP). Residues 785–808 (QQTSYSSSAGSSTRSRQSTQSYRK) are compositionally biased toward low complexity.

The protein localises to the cytoplasm. The protein resides in the cytoskeleton. It localises to the cilium basal body. Its subcellular location is the cell projection. It is found in the cilium. The protein localises to the microtubule organizing center. The protein resides in the centrosome. It localises to the centriole. Involved in ciliogenesis. It is required for appropriate acetylation and polyglutamylation of ciliary microtubules, and regulation of cilium length. Acts as a positive regulator of hedgehog (Hh)signaling. This is LisH domain-containing protein ARMC9 (armc9) from Xenopus tropicalis (Western clawed frog).